Consider the following 159-residue polypeptide: 6,7-dimethyl-8-ribityllumazine synthase (159 aa).

5-amino-6-(D-ribitylamino)uracil contacts are provided by residues F23, 58-60 (AYE), and 82-84 (TII). H90 serves as the catalytic Proton donor. A 5-amino-6-(D-ribitylamino)uracil-binding site is contributed by L115. R129 is a binding site for (2S)-2-hydroxy-3-oxobutyl phosphate.

It belongs to the DMRL synthase family. As to quaternary structure, forms an icosahedral capsid composed of 60 subunits, arranged as a dodecamer of pentamers.

The catalysed reaction is (2S)-2-hydroxy-3-oxobutyl phosphate + 5-amino-6-(D-ribitylamino)uracil = 6,7-dimethyl-8-(1-D-ribityl)lumazine + phosphate + 2 H2O + H(+). The protein operates within cofactor biosynthesis; riboflavin biosynthesis; riboflavin from 2-hydroxy-3-oxobutyl phosphate and 5-amino-6-(D-ribitylamino)uracil: step 1/2. Functionally, catalyzes the formation of 6,7-dimethyl-8-ribityllumazine by condensation of 5-amino-6-(D-ribitylamino)uracil with 3,4-dihydroxy-2-butanone 4-phosphate. This is the penultimate step in the biosynthesis of riboflavin. The sequence is that of 6,7-dimethyl-8-ribityllumazine synthase from Blochmanniella floridana.